The primary structure comprises 90 residues: Small ribosomal subunit protein uS15 (90 aa).

The protein belongs to the universal ribosomal protein uS15 family. As to quaternary structure, part of the 30S ribosomal subunit. Forms a bridge to the 50S subunit in the 70S ribosome, contacting the 23S rRNA.

Its function is as follows. One of the primary rRNA binding proteins, it binds directly to 16S rRNA where it helps nucleate assembly of the platform of the 30S subunit by binding and bridging several RNA helices of the 16S rRNA. Forms an intersubunit bridge (bridge B4) with the 23S rRNA of the 50S subunit in the ribosome. The protein is Small ribosomal subunit protein uS15 of Tropheryma whipplei (strain TW08/27) (Whipple's bacillus).